Consider the following 213-residue polypeptide: Small ribosomal subunit protein uS3 (213 aa).

Residues 38-106 (IRSYIKKLLY…EFSLEVTEVR (69 aa)) enclose the KH type-2 domain.

It belongs to the universal ribosomal protein uS3 family. In terms of assembly, part of the 30S ribosomal subunit. Forms a tight complex with proteins S10 and S14.

In terms of biological role, binds the lower part of the 30S subunit head. Binds mRNA in the 70S ribosome, positioning it for translation. The sequence is that of Small ribosomal subunit protein uS3 from Lawsonia intracellularis (strain PHE/MN1-00).